We begin with the raw amino-acid sequence, 276 residues long: Undecaprenyl-diphosphatase 1 (276 aa).

Helical transmembrane passes span 44-63 (ALAFNIIIQLGAILAVIWEY), 85-105 (VNLLIAFMPAVVLGVAFADLI), 109-129 (LFNPITVAAALVIGGIVMLWA), 183-203 (AATEFSFFLAMPTMVGAAVYS), 214-234 (GDFAVFAIGFVTSFIFAMLAV), and 249-269 (FAWYRIGFGLLILATWQLGMI).

It belongs to the UppP family.

It is found in the cell inner membrane. It catalyses the reaction di-trans,octa-cis-undecaprenyl diphosphate + H2O = di-trans,octa-cis-undecaprenyl phosphate + phosphate + H(+). Catalyzes the dephosphorylation of undecaprenyl diphosphate (UPP). Confers resistance to bacitracin. The protein is Undecaprenyl-diphosphatase 1 of Stutzerimonas stutzeri (strain A1501) (Pseudomonas stutzeri).